Reading from the N-terminus, the 495-residue chain is MVAEISKDCVTIAAADQCVDMKEELPAGNYILVGVDVDTTGRRLIDEIVQLAAYTPKDNFQQYIMPYMNLNPAARQRHQIRVISIGFYRMLKSMQTYKIIKSKSEVAALMDFLNWLEMLVAKQPSTDGIVMLYHEERKFIPYMVLEALKKYGLIERFNRTVKSFVNTFNMAKASLGDANLKNCGLRKLSLLLAKSNDESANKENEPENVNRNGSSNDKCHKNGMNQEHDFFEGSANVRAKMVYEVALQLTNSDRTSEPESSEELVNLFNAVKPFAKLVSSDIMELQTQNENMGRQNSFRPVFLNYFRTTLYHRVRAVKFRIVLAENGFTLDSLKAIWTEKRKEGLELALTNIDTLKTEEKTELVELLDSFFDPSKATIKPSFKPNGNGPRRRIRANGAASSKNGAMSSRSTSTEFGAGGDKSQTEGLSAPVPDSTTKSPSPGKTGGRPHRKRNNTRNGFGSAKGPKKAETLNIAAPEPPQSPVAVSTPVAIAATN.

2 disordered regions span residues 197–217 (DESA…SSND) and 377–495 (TIKP…AATN). 2 stretches are compositionally biased toward polar residues: residues 207–216 (ENVNRNGSSN) and 398–414 (AASS…TSTE).

Functionally, ensures the proper localization of the mRNA of the bicoid gene to the anterior regions of the oocyte thus playing a fundamental role in the establishment of the polarity of the oocyte. May bind the bcd mRNA. The chain is Maternal protein exuperantia-1 (exu1) from Drosophila pseudoobscura pseudoobscura (Fruit fly).